The chain runs to 1089 residues: Probable transport protein MmpL8 (1089 aa).

The segment at 1–26 is disordered; that stretch reads MCDVLMQPVRTPRPSTNLRSKPLRPT. A run of 12 helical transmembrane segments spans residues 44–64, 222–242, 257–277, 316–336, 349–369, 400–420, 555–575, 874–894, 898–918, 930–950, 973–993, and 996–1016; these read WVVI…VPSL, ITIL…TMVL, LVAI…IFMS, IGKV…GMVF, LGIS…ALMV, KTHL…AGLA, AIST…LLGG, IIAM…RAIV, YLIG…VIVF, IPGL…MLLI, GGVI…LVFA, and GSVV…TFLV. The tract at residues 1056–1078 is disordered; that stretch reads RTKRKPLLPKEEEEQSPPDDDDL. Residues 1066–1078 show a composition bias toward acidic residues; it reads EEEEQSPPDDDDL.

It belongs to the resistance-nodulation-cell division (RND) (TC 2.A.6) family. MmpL subfamily.

It localises to the cell membrane. This is Probable transport protein MmpL8 (mmpL8) from Mycobacterium bovis (strain ATCC BAA-935 / AF2122/97).